A 335-amino-acid polypeptide reads, in one-letter code: NAC domain-containing protein 87 (335 aa).

Positions 21–172 (LPPGFRFHPT…EWVVCRVFHK (152 aa)) constitute an NAC domain. The DNA-binding element occupies 119 to 178 (VGMKKTLVFYRGRAPKGEKTNWVMHEYRLEGKYSYYNLPKSARDEWVVCRVFHKNNPSTT).

The protein localises to the nucleus. Functionally, binds to the promoter regions of genes involved in chlorophyll catabolic processes, such as NYC1, SGR1, SGR2 and PAO. The polypeptide is NAC domain-containing protein 87 (Arabidopsis thaliana (Mouse-ear cress)).